We begin with the raw amino-acid sequence, 1088 residues long: Probable cellulose synthase A catalytic subunit 9 [UDP-forming] (1088 aa).

Met1 is subject to N-acetylmethionine. Over 1–283 the chain is Cytoplasmic; it reads MNTGGRLIAG…RSSRINPYRM (283 aa). Residues Cys39, Cys42, Cys58, Cys61, Cys66, Cys69, Cys81, and Cys84 each coordinate Zn(2+). The RING-type; degenerate zinc finger occupies 39 to 85; that stretch reads CKICRDEIELTDNGEPFIACNECAFPTCRPCYEYERREGNQACPQCG. A helical transmembrane segment spans residues 284-304; it reads LIFCRLAILGLFFHYRILHPV. Residues 305–306 are Extracellular-facing; it reads ND. Residues 307-327 form a helical membrane-spanning segment; the sequence is AFGLWLTSVICEIWFAVSWIL. Residues 328–871 are Cytoplasmic-facing; sequence DQFPKWYPIE…INSVVYPWTS (544 aa). Residues Ser366, Lys372, Glu373, Asp402, and Lys543 each coordinate UDP-alpha-D-glucose. Asp402 is a catalytic residue. Positions 544 and 568 each coordinate Mn(2+). Asp788 is a catalytic residue. Residues 872-892 form a helical membrane-spanning segment; that stretch reads LPLLVYCSLPAICLLTGKFIV. Residues 893 to 897 lie on the Extracellular side of the membrane; that stretch reads PEISN. A helical transmembrane segment spans residues 898 to 918; that stretch reads YAGILFLLMFMSIAVTGILEM. Residues 919-933 lie on the Cytoplasmic side of the membrane; that stretch reads QWGKIGIDDWWRNEQ. A helical membrane pass occupies residues 934–954; it reads FWVIGGVSSHLFALFQGLLKV. Over 955 to 983 the chain is Extracellular; that stretch reads LAGVSTNFTVTSKAADDGEFSELYIFKWT. Asn961 carries N-linked (GlcNAc...) asparagine glycosylation. Residues 984-1004 form a helical membrane-spanning segment; sequence SLLIPPTTLLIINIVGVIVGV. Topologically, residues 1005 to 1015 are cytoplasmic; the sequence is SDAINNGYDSW. The helical transmembrane segment at 1016–1036 threads the bilayer; the sequence is GPLFGRLFFALWVIVHLYPFL. The Extracellular segment spans residues 1037–1045; that stretch reads KGLLGKQDR. Residues 1046-1066 traverse the membrane as a helical segment; that stretch reads VPTIILVWSILLASILTLLWV. The Cytoplasmic segment spans residues 1067 to 1088; the sequence is RVNPFVSKDGPVLEICGLDCLK.

The protein belongs to the glycosyltransferase 2 family. Plant cellulose synthase subfamily. Requires Mn(2+) as cofactor. Zn(2+) serves as cofactor. In terms of tissue distribution, expressed in young plants, stems and flowers.

The protein localises to the cell membrane. The enzyme catalyses [(1-&gt;4)-beta-D-glucosyl](n) + UDP-alpha-D-glucose = [(1-&gt;4)-beta-D-glucosyl](n+1) + UDP + H(+). It participates in glycan metabolism; plant cellulose biosynthesis. Functionally, probable catalytic subunit of cellulose synthase terminal complexes ('rosettes'), required for beta-1,4-glucan microfibril crystallization, a major mechanism of the cell wall formation. The protein is Probable cellulose synthase A catalytic subunit 9 [UDP-forming] of Arabidopsis thaliana (Mouse-ear cress).